The chain runs to 661 residues: UvrABC system protein B (661 aa).

Residues 25 to 414 (AGLNSKKRSQ…DTVVELIIRP (390 aa)) form the Helicase ATP-binding domain. 38 to 45 (GITGSGKT) lines the ATP pocket. Residues 91–114 (YYDYYQPEAYIARTDTFIEKDSSI) carry the Beta-hairpin motif. Residues 430-592 (QVEDLIGEIQ…IIPKTINRAI (163 aa)) form the Helicase C-terminal domain. One can recognise a UVR domain in the interval 621–656 (KAHIEKLKKDMLKAASNLEFEQAAKLRDQLKTLEEA).

It belongs to the UvrB family. Forms a heterotetramer with UvrA during the search for lesions. Interacts with UvrC in an incision complex.

The protein resides in the cytoplasm. In terms of biological role, the UvrABC repair system catalyzes the recognition and processing of DNA lesions. A damage recognition complex composed of 2 UvrA and 2 UvrB subunits scans DNA for abnormalities. Upon binding of the UvrA(2)B(2) complex to a putative damaged site, the DNA wraps around one UvrB monomer. DNA wrap is dependent on ATP binding by UvrB and probably causes local melting of the DNA helix, facilitating insertion of UvrB beta-hairpin between the DNA strands. Then UvrB probes one DNA strand for the presence of a lesion. If a lesion is found the UvrA subunits dissociate and the UvrB-DNA preincision complex is formed. This complex is subsequently bound by UvrC and the second UvrB is released. If no lesion is found, the DNA wraps around the other UvrB subunit that will check the other stand for damage. The protein is UvrABC system protein B of Rickettsia felis (strain ATCC VR-1525 / URRWXCal2) (Rickettsia azadi).